The sequence spans 683 residues: Leishmanolysin-like peptidase (683 aa).

Residue H257 participates in Zn(2+) binding. Residue E258 is part of the active site. H261 and H364 together coordinate Zn(2+).

The protein belongs to the peptidase M8 family. Requires Zn(2+) as cofactor.

Its subcellular location is the cytoplasm. Its function is as follows. Essential for the coordination of mitotic progression, and also plays a role in cell migration. The protein is Leishmanolysin-like peptidase (Invadolysin) of Drosophila melanogaster (Fruit fly).